Reading from the N-terminus, the 263-residue chain is Rhomboid-like protease 3 (263 aa).

6 helical membrane-spanning segments follow: residues 37–57 (KSIV…CVLS), 86–106 (VVTP…LVFI), 121–141 (KFLV…MLMQ), 142–162 (PWAL…GMAA), 189–209 (LIYF…GGFL), and 231–251 (VLFY…PPLL). Ser-150 serves as the catalytic Nucleophile. His-204 is a catalytic residue.

This sequence belongs to the peptidase S54 family.

It localises to the membrane. It carries out the reaction Cleaves type-1 transmembrane domains using a catalytic dyad composed of serine and histidine that are contributed by different transmembrane domains.. Functionally, serine protease involved in intramembrane proteolysis and the subsequent release of polypeptides from their membrane anchors. The chain is Rhomboid-like protease 3 (ROM3) from Toxoplasma gondii.